We begin with the raw amino-acid sequence, 232 residues long: Ribonuclease 3 (232 aa).

The 126-residue stretch at 10-135 folds into the RNase III domain; the sequence is ALKIYEATGY…LIGAMYMDGG (126 aa). Glu-48 contacts Mg(2+). Residue Asp-52 is part of the active site. Asn-121 and Glu-124 together coordinate Mg(2+). Glu-124 is a catalytic residue. In terms of domain architecture, DRBM spans 161-230; sequence DPKTALQEWV…AKLMLKKITE (70 aa).

It belongs to the ribonuclease III family. In terms of assembly, homodimer. Requires Mg(2+) as cofactor.

The protein localises to the cytoplasm. It catalyses the reaction Endonucleolytic cleavage to 5'-phosphomonoester.. Functionally, digests double-stranded RNA. Involved in the processing of primary rRNA transcript to yield the immediate precursors to the large and small rRNAs (23S and 16S). Processes some mRNAs, and tRNAs when they are encoded in the rRNA operon. Processes pre-crRNA and tracrRNA of type II CRISPR loci if present in the organism. The polypeptide is Ribonuclease 3 (Anaplasma marginale (strain St. Maries)).